Here is a 257-residue protein sequence, read N- to C-terminus: Acetylglutamate kinase (257 aa).

Residues G43–G44, R65, and N157 contribute to the substrate site. Residues D180–L185 and I208–T210 contribute to the ATP site.

This sequence belongs to the acetylglutamate kinase family. ArgB subfamily. Homodimer.

It localises to the cytoplasm. The catalysed reaction is N-acetyl-L-glutamate + ATP = N-acetyl-L-glutamyl 5-phosphate + ADP. It participates in amino-acid biosynthesis; L-arginine biosynthesis; N(2)-acetyl-L-ornithine from L-glutamate: step 2/4. In terms of biological role, catalyzes the ATP-dependent phosphorylation of N-acetyl-L-glutamate. The chain is Acetylglutamate kinase from Edwardsiella ictaluri (strain 93-146).